Reading from the N-terminus, the 231-residue chain is Ion-translocating oxidoreductase complex subunit E (231 aa).

7 consecutive transmembrane segments (helical) span residues 18–38 (GLVQ…ITNA), 39–59 (LGLG…VSLV), 69–89 (IPVF…LINA), 93–113 (NLYL…VIIG), 127–147 (SAFD…VLGA), 157–177 (LFGG…IHVW), and 182–202 (PFLL…LIAL).

The protein belongs to the NqrDE/RnfAE family. As to quaternary structure, the complex is composed of six subunits: RnfA, RnfB, RnfC, RnfD, RnfE and RnfG.

The protein localises to the cell inner membrane. Its function is as follows. Part of a membrane-bound complex that couples electron transfer with translocation of ions across the membrane. In Shewanella frigidimarina (strain NCIMB 400), this protein is Ion-translocating oxidoreductase complex subunit E.